The chain runs to 106 residues: uORF protein (106 aa).

The segment covering 1–19 (MDLETRVSGHEKPQRRNPE) has biased composition (basic and acidic residues). A disordered region spans residues 1–31 (MDLETRVSGHEKPQRRNPEDPDCQYAKTRSS).

The protein localises to the host cytoplasm. The protein resides in the host cytoskeleton. Its function is as follows. Plays a role in viral replication. The sequence is that of uORF protein from Zika virus (ZIKV).